Reading from the N-terminus, the 98-residue chain is Prolactin-releasing peptide (98 aa).

The signal sequence occupies residues 1–22; that stretch reads MKAVGAWLLCLLLLGLALQGAA. 2 disordered regions span residues 52–71 and 79–98; these read RFGRRRAAPGDGPRPGPRRV and GGAEPSRALPGRLTAQLVQE. Residue Phe53 is modified to Phenylalanine amide. Positions 58-98 are excised as a propeptide; sequence AAPGDGPRPGPRRVPACFRLEGGAEPSRALPGRLTAQLVQE.

Post-translationally, amidation of C-terminus is required for receptor interaction. In terms of tissue distribution, medulla oblongata and hypothalamus.

The protein localises to the secreted. In terms of biological role, stimulates prolactin (PRL) release and regulates the expression of prolactin through its receptor GPR10. May stimulate lactotrophs directly to secrete PRL. In Bos taurus (Bovine), this protein is Prolactin-releasing peptide (PRLH).